Consider the following 405-residue polypeptide: Nicotinate phosphoribosyltransferase (405 aa).

A Phosphohistidine; by autocatalysis modification is found at His224.

The protein belongs to the NAPRTase family. Post-translationally, transiently phosphorylated on a His residue during the reaction cycle. Phosphorylation strongly increases the affinity for substrates and increases the rate of nicotinate D-ribonucleotide production. Dephosphorylation regenerates the low-affinity form of the enzyme, leading to product release.

The enzyme catalyses nicotinate + 5-phospho-alpha-D-ribose 1-diphosphate + ATP + H2O = nicotinate beta-D-ribonucleotide + ADP + phosphate + diphosphate. The protein operates within cofactor biosynthesis; NAD(+) biosynthesis; nicotinate D-ribonucleotide from nicotinate: step 1/1. Catalyzes the synthesis of beta-nicotinate D-ribonucleotide from nicotinate and 5-phospho-D-ribose 1-phosphate at the expense of ATP. The sequence is that of Nicotinate phosphoribosyltransferase from Methanococcoides burtonii (strain DSM 6242 / NBRC 107633 / OCM 468 / ACE-M).